We begin with the raw amino-acid sequence, 305 residues long: tRNA dimethylallyltransferase (305 aa).

11 to 18 (GPTAVGKT) lines the ATP pocket. Substrate is bound at residue 13 to 18 (TAVGKT). The tract at residues 36–39 (DSMQ) is interaction with substrate tRNA.

It belongs to the IPP transferase family. In terms of assembly, monomer. The cofactor is Mg(2+).

The catalysed reaction is adenosine(37) in tRNA + dimethylallyl diphosphate = N(6)-dimethylallyladenosine(37) in tRNA + diphosphate. Catalyzes the transfer of a dimethylallyl group onto the adenine at position 37 in tRNAs that read codons beginning with uridine, leading to the formation of N6-(dimethylallyl)adenosine (i(6)A). The polypeptide is tRNA dimethylallyltransferase (Listeria monocytogenes serotype 4a (strain HCC23)).